The following is a 338-amino-acid chain: Holliday junction branch migration complex subunit RuvB (338 aa).

Residues 1–179 form a large ATPase domain (RuvB-L) region; that stretch reads MTDLTTPIRT…FGIPVRLNFY (179 aa). ATP is bound by residues L18, R19, G60, K63, T64, T65, R169, Y179, and R216. A Mg(2+)-binding site is contributed by T64. Residues 180–250 form a small ATPAse domain (RuvB-S) region; the sequence is THAELEQVIG…AADAALNRLE (71 aa). The segment at 253 to 338 is head domain (RuvB-H); that stretch reads ALGLDAMDRR…AGSQDGLFDK (86 aa). The DNA site is built by R289, R308, and R313.

This sequence belongs to the RuvB family. As to quaternary structure, homohexamer. Forms an RuvA(8)-RuvB(12)-Holliday junction (HJ) complex. HJ DNA is sandwiched between 2 RuvA tetramers; dsDNA enters through RuvA and exits via RuvB. An RuvB hexamer assembles on each DNA strand where it exits the tetramer. Each RuvB hexamer is contacted by two RuvA subunits (via domain III) on 2 adjacent RuvB subunits; this complex drives branch migration. In the full resolvosome a probable DNA-RuvA(4)-RuvB(12)-RuvC(2) complex forms which resolves the HJ.

Its subcellular location is the cytoplasm. It carries out the reaction ATP + H2O = ADP + phosphate + H(+). Its function is as follows. The RuvA-RuvB-RuvC complex processes Holliday junction (HJ) DNA during genetic recombination and DNA repair, while the RuvA-RuvB complex plays an important role in the rescue of blocked DNA replication forks via replication fork reversal (RFR). RuvA specifically binds to HJ cruciform DNA, conferring on it an open structure. The RuvB hexamer acts as an ATP-dependent pump, pulling dsDNA into and through the RuvAB complex. RuvB forms 2 homohexamers on either side of HJ DNA bound by 1 or 2 RuvA tetramers; 4 subunits per hexamer contact DNA at a time. Coordinated motions by a converter formed by DNA-disengaged RuvB subunits stimulates ATP hydrolysis and nucleotide exchange. Immobilization of the converter enables RuvB to convert the ATP-contained energy into a lever motion, pulling 2 nucleotides of DNA out of the RuvA tetramer per ATP hydrolyzed, thus driving DNA branch migration. The RuvB motors rotate together with the DNA substrate, which together with the progressing nucleotide cycle form the mechanistic basis for DNA recombination by continuous HJ branch migration. Branch migration allows RuvC to scan DNA until it finds its consensus sequence, where it cleaves and resolves cruciform DNA. The sequence is that of Holliday junction branch migration complex subunit RuvB from Sphingopyxis alaskensis (strain DSM 13593 / LMG 18877 / RB2256) (Sphingomonas alaskensis).